We begin with the raw amino-acid sequence, 185 residues long: Photosystem I assembly protein Ycf4 (185 aa).

2 consecutive transmembrane segments (helical) span residues 21 to 43 (NFCW…TSSY) and 63 to 85 (GLVM…CTIL).

Belongs to the Ycf4 family.

It localises to the plastid. The protein resides in the chloroplast thylakoid membrane. Seems to be required for the assembly of the photosystem I complex. This Brassica oleracea (Wild cabbage) protein is Photosystem I assembly protein Ycf4.